A 469-amino-acid chain; its full sequence is E3 ubiquitin-protein ligase TRIM21 (469 aa).

The RING-type zinc-finger motif lies at 16–55; sequence CSICLDPMVEPMSIECGHSFCQECISEVGKEGGSVCPVCR. The B box-type zinc-finger motif lies at 87 to 128; that stretch reads PHGELCVVHREKIHLFCEEDGKALCWVCSQSQKHRDHPMVPI. Zn(2+) contacts are provided by cysteine 92, histidine 95, cysteine 114, and histidine 120. Positions 128-245 form a coiled coil; the sequence is IEEAAQEYQE…RRGSALELLQ (118 aa). Phosphoserine is present on serine 266. The region spanning 268–467 is the B30.2/SPRY domain; the sequence is DLRNVFYVPG…APLILCPLKT (200 aa).

The protein belongs to the TRIM/RBCC family. In terms of assembly, homotrimer. Interacts (via C-terminus) with IRF8 (via C-terminus). Component of a SCF(SKP2)-like complex containing CUL1, SKP1, TRIM21 and SKP2. Interacts with CALR, CUL1, FBXW11, HSPA5, IKBKB, IRF3, SKP1 and VCP. Interacts with SKP2; the interaction with SKP2 does not depend on an intact F-box domain. Interacts (via N-terminus and C-terminus) with DCP2 (via N-terminus and C-terminus). Interacts with ULK1, BECN1 and with ATG8 family members, including GABARAP, GABARAPL1, GABARAPL2 and MAP1LC3C/LC3C. Interacts with TRIM21 and SQSTM1/sequestosome 1. Interacts with IRF3. Interacts (via the SPRY domain) with NMI (via coiled-coil domain); the interaction promotes 'Lys-63'-linked ubiquitination of NMI. Interacts with IFI35 and NMI; the interaction facilitates NMI-IFI35 complex formation. Post-translationally, autoubiquitinated; does not lead to its proteasomal degradation. Deubiquitinated by USP4; leading to its stabilization.

The protein resides in the cytoplasm. The protein localises to the cytoplasmic vesicle. Its subcellular location is the autophagosome. It is found in the nucleus. It localises to the P-body. The protein resides in the stress granule. The catalysed reaction is S-ubiquitinyl-[E2 ubiquitin-conjugating enzyme]-L-cysteine + [acceptor protein]-L-lysine = [E2 ubiquitin-conjugating enzyme]-L-cysteine + N(6)-ubiquitinyl-[acceptor protein]-L-lysine.. Its pathway is protein modification; protein ubiquitination. Its function is as follows. E3 ubiquitin-protein ligase whose activity is dependent on E2 enzymes, UBE2D1, UBE2D2, UBE2E1 and UBE2E2. Forms a ubiquitin ligase complex in cooperation with the E2 UBE2D2 that is used not only for the ubiquitination of USP4 and IKBKB but also for its self-ubiquitination. Component of cullin-RING-based SCF (SKP1-CUL1-F-box protein) E3 ubiquitin-protein ligase complexes such as SCF(SKP2)-like complexes. A TRIM21-containing SCF(SKP2)-like complex is shown to mediate ubiquitination of CDKN1B ('Thr-187' phosphorylated-form), thereby promoting its degradation by the proteasome. Monoubiquitinates IKBKB that will negatively regulates Tax-induced NF-kappa-B signaling. Negatively regulates IFN-beta production post-pathogen recognition by catalyzing polyubiquitin-mediated degradation of IRF3. Mediates the ubiquitin-mediated proteasomal degradation of IgG1 heavy chain, which is linked to the VCP-mediated ER-associated degradation (ERAD) pathway. Promotes IRF8 ubiquitination, which enhanced the ability of IRF8 to stimulate cytokine genes transcription in macrophages. Plays a role in the regulation of the cell cycle progression. Enhances the decapping activity of DCP2. Exists as a ribonucleoprotein particle present in all mammalian cells studied and composed of a single polypeptide and one of four small RNA molecules. At least two isoforms are present in nucleated and red blood cells, and tissue specific differences in RO/SSA proteins have been identified. The common feature of these proteins is their ability to bind HY RNAs.2. Involved in the regulation of innate immunity and the inflammatory response in response to IFNG/IFN-gamma. Organizes autophagic machinery by serving as a platform for the assembly of ULK1, Beclin 1/BECN1 and ATG8 family members and recognizes specific autophagy targets, thus coordinating target recognition with assembly of the autophagic apparatus and initiation of autophagy. Also regulates autophagy through FIP200/RB1CC1 ubiquitination and subsequent decreased protein stability. Represses the innate antiviral response by facilitating the formation of the NMI-IFI35 complex through 'Lys-63'-linked ubiquitination of NMI. During viral infection, promotes cell pyroptosis by mediating 'Lys-6'-linked ubiquitination of ISG12a/IFI27, facilitating its translocation into the mitochondria and subsequent CASP3 activation. When up-regulated through the IFN/JAK/STAT signaling pathway, promotes 'Lys-27'-linked ubiquitination of MAVS, leading to the recruitment of TBK1 and up-regulation of innate immunity. Mediates 'Lys-63'-linked polyubiquitination of G3BP1 in response to heat shock, leading to stress granule disassembly. The polypeptide is E3 ubiquitin-protein ligase TRIM21 (TRIM21) (Bos taurus (Bovine)).